The primary structure comprises 233 residues: 2,3,4,5-tetrahydropyridine-2,6-dicarboxylate N-acetyltransferase (233 aa).

This sequence belongs to the transferase hexapeptide repeat family. DapH subfamily.

The enzyme catalyses (S)-2,3,4,5-tetrahydrodipicolinate + acetyl-CoA + H2O = L-2-acetamido-6-oxoheptanedioate + CoA. Its pathway is amino-acid biosynthesis; L-lysine biosynthesis via DAP pathway; LL-2,6-diaminopimelate from (S)-tetrahydrodipicolinate (acetylase route): step 1/3. Its function is as follows. Catalyzes the transfer of an acetyl group from acetyl-CoA to tetrahydrodipicolinate. In Petrotoga mobilis (strain DSM 10674 / SJ95), this protein is 2,3,4,5-tetrahydropyridine-2,6-dicarboxylate N-acetyltransferase.